The chain runs to 417 residues: Tryptophan synthase beta chain (417 aa).

Position 110 is an N6-(pyridoxal phosphate)lysine (K110).

The protein belongs to the TrpB family. In terms of assembly, tetramer of two alpha and two beta chains. Pyridoxal 5'-phosphate serves as cofactor.

The enzyme catalyses (1S,2R)-1-C-(indol-3-yl)glycerol 3-phosphate + L-serine = D-glyceraldehyde 3-phosphate + L-tryptophan + H2O. Its pathway is amino-acid biosynthesis; L-tryptophan biosynthesis; L-tryptophan from chorismate: step 5/5. Its function is as follows. The beta subunit is responsible for the synthesis of L-tryptophan from indole and L-serine. This chain is Tryptophan synthase beta chain, found in Prochlorococcus marinus (strain NATL1A).